Consider the following 504-residue polypeptide: Galactose/methyl galactoside import ATP-binding protein MglA (504 aa).

2 ABC transporter domains span residues leucine 8–aspartate 247 and threonine 258–isoleucine 504. Residue glycine 40–serine 47 coordinates ATP.

It belongs to the ABC transporter superfamily. Galactose/methyl galactoside importer (TC 3.A.1.2.3) family. The complex is composed of one ATP-binding protein (MglA), two transmembrane proteins (MglC) and a solute-binding protein (MglB).

The protein resides in the cell membrane. The enzyme catalyses D-galactose(out) + ATP + H2O = D-galactose(in) + ADP + phosphate + H(+). It catalyses the reaction methyl beta-D-galactoside(out) + ATP + H2O = methyl beta-D-galactoside(in) + ADP + phosphate + H(+). Functionally, part of the ABC transporter complex MglABC involved in galactose/methyl galactoside import. Responsible for energy coupling to the transport system. This is Galactose/methyl galactoside import ATP-binding protein MglA from Clostridium tetani (strain Massachusetts / E88).